The following is a 332-amino-acid chain: Protein phosphatase PTC7 homolog fig (332 aa).

A PPM-type phosphatase domain is found at 70–325 (KPCSPRERAN…DDITLILASV (256 aa)). D102, G103, and D247 together coordinate Mn(2+).

Belongs to the PP2C family. Mg(2+) serves as cofactor. The cofactor is Mn(2+).

It carries out the reaction O-phospho-L-seryl-[protein] + H2O = L-seryl-[protein] + phosphate. It catalyses the reaction O-phospho-L-threonyl-[protein] + H2O = L-threonyl-[protein] + phosphate. The protein is Protein phosphatase PTC7 homolog fig of Drosophila ananassae (Fruit fly).